Here is an 85-residue protein sequence, read N- to C-terminus: Cell division topological specificity factor (85 aa).

This sequence belongs to the MinE family.

In terms of biological role, prevents the cell division inhibition by proteins MinC and MinD at internal division sites while permitting inhibition at polar sites. This ensures cell division at the proper site by restricting the formation of a division septum at the midpoint of the long axis of the cell. This Stutzerimonas stutzeri (strain A1501) (Pseudomonas stutzeri) protein is Cell division topological specificity factor.